The sequence spans 423 residues: Maltooligosaccharide ABC transporter solute-binding lipoprotein (423 aa).

Positions 1–24 are cleaved as a signal peptide; that stretch reads MSSKFMKSTAVLGTVTLASLLLVA. The N-palmitoyl cysteine moiety is linked to residue cysteine 25. Cysteine 25 carries S-diacylglycerol cysteine lipidation. Substrate contacts are provided by residues tyrosine 52, aspartate 77, aspartate 83, 103 to 104, glutamate 148, aspartate 193, asparagine 196, 251 to 254, tryptophan 274, and lysine 307; these read DR and EGAG.

The protein belongs to the bacterial solute-binding protein 1 family.

It is found in the cell membrane. Its function is as follows. Part of an ABC transporter complex involved in the uptake of maltodextrins. Binds glycogen-derived linear maltooligosaccharides increasing in size from maltotriose to maltooctaose with the highest affinity for maltotriose. Has a very weak affinity for maltose. Has also a very low affinity for maltotetraitol, indicating that the binding is selective for maltooligosaccharides with an intact reducing end. This chain is Maltooligosaccharide ABC transporter solute-binding lipoprotein (malX), found in Streptococcus pneumoniae (strain ATCC BAA-255 / R6).